Consider the following 96-residue polypeptide: Large ribosomal subunit protein uL23 (96 aa).

The protein belongs to the universal ribosomal protein uL23 family. As to quaternary structure, part of the 50S ribosomal subunit. Contacts protein L29, and trigger factor when it is bound to the ribosome.

Its function is as follows. One of the early assembly proteins it binds 23S rRNA. One of the proteins that surrounds the polypeptide exit tunnel on the outside of the ribosome. Forms the main docking site for trigger factor binding to the ribosome. The chain is Large ribosomal subunit protein uL23 from Vesicomyosocius okutanii subsp. Calyptogena okutanii (strain HA).